A 233-amino-acid polypeptide reads, in one-letter code: ATP-dependent Clp protease proteolytic subunit 1 (233 aa).

Catalysis depends on S136, which acts as the Nucleophile. Residue H161 is part of the active site.

It belongs to the peptidase S14 family. As to quaternary structure, fourteen ClpP subunits assemble into 2 heptameric rings which stack back to back to give a disk-like structure with a central cavity, resembling the structure of eukaryotic proteasomes.

It is found in the cytoplasm. The enzyme catalyses Hydrolysis of proteins to small peptides in the presence of ATP and magnesium. alpha-casein is the usual test substrate. In the absence of ATP, only oligopeptides shorter than five residues are hydrolyzed (such as succinyl-Leu-Tyr-|-NHMec, and Leu-Tyr-Leu-|-Tyr-Trp, in which cleavage of the -Tyr-|-Leu- and -Tyr-|-Trp bonds also occurs).. Its function is as follows. Cleaves peptides in various proteins in a process that requires ATP hydrolysis. Has a chymotrypsin-like activity. Plays a major role in the degradation of misfolded proteins. This chain is ATP-dependent Clp protease proteolytic subunit 1, found in Bifidobacterium longum (strain NCC 2705).